A 183-amino-acid polypeptide reads, in one-letter code: Ribulose bisphosphate carboxylase small subunit, chloroplastic 3 (183 aa).

A chloroplast-targeting transit peptide spans Met-1–Gln-57.

It belongs to the RuBisCO small chain family. Heterohexadecamer of 8 large and 8 small subunits.

The protein resides in the plastid. It is found in the chloroplast. RuBisCO catalyzes two reactions: the carboxylation of D-ribulose 1,5-bisphosphate, the primary event in carbon dioxide fixation, as well as the oxidative fragmentation of the pentose substrate. Both reactions occur simultaneously and in competition at the same active site. Although the small subunit is not catalytic it is essential for maximal activity. In Mesembryanthemum crystallinum (Common ice plant), this protein is Ribulose bisphosphate carboxylase small subunit, chloroplastic 3.